We begin with the raw amino-acid sequence, 738 residues long: MEKSRMNLPKGPDTLCFDKDEFMKEDFDVDHFVSDCRKRVQLEELRDDLELYYKLLKTAMVELINKDYADFVNLSTNLVGMDKALNQLSVPLGQLREEVLSLRSSVSEGIRAVDERMSKQEDIRKKKMCVLRLIQVIRSVEKIEKILNSQSSKETSALEASSPLLTGQILERIATEFNQLQFHAVQSKGMPLLDKVRPRIAGITAMLQQSLEGLLLEGLQTSDVDIIRHCLRTYATIDKTRDAEALVGQVLVKPYIDEVIIEQFVESHPNGLQVMYNKLLEFVPHHCRLLREVTGGAISSEKGNTVPGYDFLVNSVWPQIVQGLEEKLPSLFNPGNPDAFHEKYTISMDFVRRLERQCGSQASVKRLRAHPAYHSFNKKWNLPVYFQIRFREIAGSLEAALTDVLEDAPAESPYCLLASHRTWSSLRRCWSDEMFLPLLVHRLWRLTLQILARYSVFVNELSLRPISNESPKEIKKPLVTGSKEPSITQGNTEDQGSGPSETKPVVSISRTQLVYVVADLDKLQEQLPELLEIIKPKLEMIGFKNFSSISAALEDSQSSFSACVPSLSSKIIQDLSDSCFGFLKSALEVPRLYRRTNKEVPTTASSYVDSALKPLFQLQSGHKDKLKQAIIQQWLEGTLSESTHKYYETVSDVLNSVKKMEESLKRLKQARKTTPANPVGPSGGMSDDDKIRLQLALDVEYLGEQIQKLGLQASDIKSFSALAELVAAAKDQATAEQP.

Disordered stretches follow at residues 474-504 (IKKP…ETKP) and 668-687 (KQAR…GMSD). Residues 483–500 (KEPSITQGNTEDQGSGPS) show a composition bias toward polar residues.

Belongs to the COG2 family. As to quaternary structure, component of the conserved oligomeric Golgi complex which is composed of eight different subunits and is required for normal Golgi morphology and localization.

The protein resides in the golgi apparatus membrane. Functionally, required for normal Golgi morphology and function. This is Conserved oligomeric Golgi complex subunit 2 (COG2) from Homo sapiens (Human).